Here is a 327-residue protein sequence, read N- to C-terminus: uncharacterized protein (327 aa).

The signal sequence occupies residues 1–24 (MKQPGFIRLATLALLSTLSFFSHG).

This is an uncharacterized protein from Salmonella typhimurium (strain LT2 / SGSC1412 / ATCC 700720).